Here is a 159-residue protein sequence, read N- to C-terminus: Ribosomal RNA large subunit methyltransferase H (159 aa).

S-adenosyl-L-methionine-binding positions include Leu76, Gly108, and 127–132 (FGLLTL).

This sequence belongs to the RNA methyltransferase RlmH family. Homodimer.

It localises to the cytoplasm. The enzyme catalyses pseudouridine(1915) in 23S rRNA + S-adenosyl-L-methionine = N(3)-methylpseudouridine(1915) in 23S rRNA + S-adenosyl-L-homocysteine + H(+). In terms of biological role, specifically methylates the pseudouridine at position 1915 (m3Psi1915) in 23S rRNA. This Streptococcus pyogenes serotype M18 (strain MGAS8232) protein is Ribosomal RNA large subunit methyltransferase H.